The following is a 219-amino-acid chain: tRNA (guanine-N(7)-)-methyltransferase (219 aa).

Positions 47, 72, 99, and 125 each coordinate S-adenosyl-L-methionine. The active site involves Asp-125. Substrate-binding residues include Lys-129 and Asp-161.

This sequence belongs to the class I-like SAM-binding methyltransferase superfamily. TrmB family.

The enzyme catalyses guanosine(46) in tRNA + S-adenosyl-L-methionine = N(7)-methylguanosine(46) in tRNA + S-adenosyl-L-homocysteine. Its pathway is tRNA modification; N(7)-methylguanine-tRNA biosynthesis. Functionally, catalyzes the formation of N(7)-methylguanine at position 46 (m7G46) in tRNA. The protein is tRNA (guanine-N(7)-)-methyltransferase of Nostoc sp. (strain PCC 7120 / SAG 25.82 / UTEX 2576).